We begin with the raw amino-acid sequence, 468 residues long: Chromosomal replication initiator protein DnaA (468 aa).

The segment at 1-84 (MSSSLWLQCL…RFEVGSRRVA (84 aa)) is domain I, interacts with DnaA modulators. Residues 84 to 131 (AAPKPAPTRTPADVAAESSAPAQLQARKPVHKTWDDDAQVIADINHRS) are domain II. The segment covering 85 to 95 (APKPAPTRTPA) has biased composition (low complexity). Positions 85–104 (APKPAPTRTPADVAAESSAP) are disordered. Positions 132–348 (NVNPKHKFNN…GALNRVIANA (217 aa)) are domain III, AAA+ region. ATP is bound by residues glycine 176, glycine 178, lysine 179, and threonine 180. The segment at 349-468 (NFTGRPITID…YSNLIRTLSS (120 aa)) is domain IV, binds dsDNA.

Belongs to the DnaA family. As to quaternary structure, oligomerizes as a right-handed, spiral filament on DNA at oriC.

The protein localises to the cytoplasm. Plays an essential role in the initiation and regulation of chromosomal replication. ATP-DnaA binds to the origin of replication (oriC) to initiate formation of the DNA replication initiation complex once per cell cycle. Binds the DnaA box (a 9 base pair repeat at the origin) and separates the double-stranded (ds)DNA. Forms a right-handed helical filament on oriC DNA; dsDNA binds to the exterior of the filament while single-stranded (ss)DNA is stabiized in the filament's interior. The ATP-DnaA-oriC complex binds and stabilizes one strand of the AT-rich DNA unwinding element (DUE), permitting loading of DNA polymerase. After initiation quickly degrades to an ADP-DnaA complex that is not apt for DNA replication. Binds acidic phospholipids. Functionally, complements a temperature-sensitive E.coli mutant, the DnaA consensus is 5'-TT(A/T)TNCACA-3'. This is Chromosomal replication initiator protein DnaA from Vibrio harveyi (Beneckea harveyi).